Here is a 119-residue protein sequence, read N- to C-terminus: Large ribosomal subunit protein bL20 (119 aa).

This sequence belongs to the bacterial ribosomal protein bL20 family.

Functionally, binds directly to 23S ribosomal RNA and is necessary for the in vitro assembly process of the 50S ribosomal subunit. It is not involved in the protein synthesizing functions of that subunit. The sequence is that of Large ribosomal subunit protein bL20 from Afipia carboxidovorans (strain ATCC 49405 / DSM 1227 / KCTC 32145 / OM5) (Oligotropha carboxidovorans).